The primary structure comprises 1131 residues: DNA polymerase II large subunit (1131 aa).

Belongs to the archaeal DNA polymerase II family. Heterodimer of a large subunit and a small subunit.

The enzyme catalyses DNA(n) + a 2'-deoxyribonucleoside 5'-triphosphate = DNA(n+1) + diphosphate. It carries out the reaction Exonucleolytic cleavage in the 3'- to 5'-direction to yield nucleoside 5'-phosphates.. Functionally, possesses two activities: a DNA synthesis (polymerase) and an exonucleolytic activity that degrades single-stranded DNA in the 3'- to 5'-direction. Has a template-primer preference which is characteristic of a replicative DNA polymerase. This Methanococcus maripaludis (strain C7 / ATCC BAA-1331) protein is DNA polymerase II large subunit.